The sequence spans 294 residues: Universal stress protein MSMEG_3950/MSMEI_3859 (294 aa).

Gly-13 lines the ATP pocket. Lys-109 is covalently cross-linked (Isoglutamyl lysine isopeptide (Lys-Gln) (interchain with Q-Cter in protein Pup)). ATP contacts are provided by residues 117–123 (GNRGMGA), 131–132 (ST), Gly-164, Asp-197, 261–267 (GSHGRGG), and 275–277 (SVS).

Belongs to the universal stress protein A family.

In Mycolicibacterium smegmatis (strain ATCC 700084 / mc(2)155) (Mycobacterium smegmatis), this protein is Universal stress protein MSMEG_3950/MSMEI_3859.